The chain runs to 116 residues: Large ribosomal subunit protein bL19 (116 aa).

The protein belongs to the bacterial ribosomal protein bL19 family.

This protein is located at the 30S-50S ribosomal subunit interface and may play a role in the structure and function of the aminoacyl-tRNA binding site. The sequence is that of Large ribosomal subunit protein bL19 from Ectopseudomonas mendocina (strain ymp) (Pseudomonas mendocina).